We begin with the raw amino-acid sequence, 962 residues long: MAPAPTSVPLVSQPNVISDLKTALAVQGSASDHPRTLHQLLSQAAERYPLQQLGFISSSAHDSSIQTKSYSTFNQHVRNLARALTDWKKPVGSIVVVYLTEHEDNMAAVWACLLAGYIPCLQPALSAQQSHKEGHINHIKNLFLSATWLTNEIGAEQVMSVDGIDIHLFSDLKLAAEGYNVPADWAAVEAKPDDEAILFLTSGSTGFSKAVVHTHRTIIASCYAKGQSYGLTSETNVLNWVGFDHVAGSLEMHITPLLFGSYQLHVHASTILSDPLSFLRLIDDKSINIAFAPNFLLAKLARDLEKRSELYGAFDLSSVKRINSGGEAVVSKTAKIFVTVLKALAKDPSKVSFVVSAGFGMTETCAGCIYDPIDLSVINPMHEFLDLGRPIQGCEMRIVDPEDGITLRPDGESGELQVRGPMVFARYYNNPQATSSSFVEGRWYRTGDIGIIEKGVMRLSGRIKDTVIVHGVSYGIPELETYLQLVEGVTHSFLAAAPYRAPGQETEGFVVFYSPTFDLNEEDASNKLAATHRALRDISVKMITLPPQQIIPIPIDQMEKTTLGKLSRARLLTLFKQGELAKHIARADELLSEARGATFVVPATITETAFAKIFAGVFNLSTDDISAADNFFELGGTSIDVIRLKREGETVFGLPEIPIIQILKHPVLRDLAKYIDALVSKDNTQQEYDPIVPLQLTGNKTPIFFVHPGVGEVLIFVNLAKYFQNERPFYAFRARGFEPGQPFFSKMDEMVSSYAAAMKRTQPKGPYAIAGYSYGGVIAFEVAKRLEAGGDEVKFVGLINIPPHIADRMHEIDWTGGMLNLSYFLGLVSKQDADDLAPTLRPLTRKEQLDVVWKLSPPERLVELQLTPEKLDHWVDIAGSLIECGKDYNPSGSVAVADVFYAIPLRGSKSDWLNNQLKPWSGFSRTEPAFTDVPGRHYTLMDFDHVPQFQKIFRSRLEARGV.

The segment at 55 to 469 (FISSSAHDSS…SGRIKDTVIV (415 aa)) is adenylation (A) domain. The Carrier domain occupies 601–679 (VPATITETAF…DLAKYIDALV (79 aa)). A thiolation and peptide carrier (T) domain region spans residues 606 to 676 (TETAFAKIFA…VLRDLAKYID (71 aa)). At S638 the chain carries O-(pantetheine 4'-phosphoryl)serine. Residues 702-805 (PIFFVHPGVG…VGLINIPPHI (104 aa)) form a thioesterase (TE) domain region.

It belongs to the ATP-dependent AMP-binding enzyme family.

Its pathway is secondary metabolite biosynthesis. Its function is as follows. An L-tyrosine:2-oxoglutarate aminotransferase (probably amt1) and atromentin synthetase nps3 catalyze consecutive steps to turn over L-tyrosine into atromentin, which represents the generic precursor molecule for the entire terphenylquinone and pulvinic acid family of pigments, which are widely distributed secondary metabolites in homobasidiomycetes. The first step catalyzed by the aminotransferase converts L-tyrosine in to 4-hydroxyphenylpyruvate (4-HPP). Adenylation of two 4-HPP monomers by the nps3 adenylation (A) domain, covalent tethering of the monomers as a thioester and oxoester onto the nps3 thiolation (T) and thioesterase (TE) domains, respectively, and symmetric C-C-bond formation between two monomers catalyzed by the nps3 TE domain leads to atromentin. Follow-up products of atromentin in S.lacrymans include atromentic acid, xerocomic acid, isoxerocomic acid and variegatic acid. The sequence is that of Atromentin synthetase nps3 (nps3) from Serpula lacrymans var. lacrymans (strain S7.9) (Dry rot fungus).